The chain runs to 193 residues: Chaperone protein TorD (193 aa).

The protein belongs to the TorD/DmsD family. TorD subfamily.

It is found in the cytoplasm. Involved in the biogenesis of TorA. Acts on TorA before the insertion of the molybdenum cofactor and, as a result, probably favors a conformation of the apoenzyme that is competent for acquiring the cofactor. This chain is Chaperone protein TorD, found in Actinobacillus succinogenes (strain ATCC 55618 / DSM 22257 / CCUG 43843 / 130Z).